Here is a 307-residue protein sequence, read N- to C-terminus: Probable GTP 3',8-cyclase (307 aa).

Residues 4–222 (ALGREVRSVR…RTFHSREVYR (219 aa)) enclose the Radical SAM core domain. R13 is a GTP binding site. 2 residues coordinate [4Fe-4S] cluster: C20 and C24. Y26 contacts S-adenosyl-L-methionine. Residue C27 coordinates [4Fe-4S] cluster. GTP is bound at residue K60. G64 and S112 together coordinate S-adenosyl-L-methionine. K150 serves as a coordination point for GTP. Residues C240 and C243 each coordinate [4Fe-4S] cluster. 245 to 247 (RIR) provides a ligand contact to GTP. C257 lines the [4Fe-4S] cluster pocket.

This sequence belongs to the radical SAM superfamily. MoaA family. It depends on [4Fe-4S] cluster as a cofactor.

It catalyses the reaction GTP + AH2 + S-adenosyl-L-methionine = (8S)-3',8-cyclo-7,8-dihydroguanosine 5'-triphosphate + 5'-deoxyadenosine + L-methionine + A + H(+). It functions in the pathway cofactor biosynthesis; molybdopterin biosynthesis. Functionally, catalyzes the cyclization of GTP to (8S)-3',8-cyclo-7,8-dihydroguanosine 5'-triphosphate. The sequence is that of Probable GTP 3',8-cyclase from Methanopyrus kandleri (strain AV19 / DSM 6324 / JCM 9639 / NBRC 100938).